A 159-amino-acid chain; its full sequence is Endoribonuclease YbeY (159 aa).

Zn(2+)-binding residues include histidine 124, histidine 128, and histidine 134.

Belongs to the endoribonuclease YbeY family. Zn(2+) serves as cofactor.

The protein resides in the cytoplasm. In terms of biological role, single strand-specific metallo-endoribonuclease involved in late-stage 70S ribosome quality control and in maturation of the 3' terminus of the 16S rRNA. The sequence is that of Endoribonuclease YbeY from Halalkalibacterium halodurans (strain ATCC BAA-125 / DSM 18197 / FERM 7344 / JCM 9153 / C-125) (Bacillus halodurans).